A 297-amino-acid chain; its full sequence is MKSLIVALAIVLAVAFMTLAERKLMGSIQRRLGPNHVGFLGLLQPFADGIKLILKETVLPLEANHWLFVLAPFLSFYLALLNWLVIPLAKGVVLMDMDLSILLILAISSLGVYAIIYTGWSANSKYTLLGSLRSTAQMVSYEIAMSLLVLTVVYMGATLNLTELAYLNSGTVLLWSLWPMAMIGFVAALAETNRAPFDLPEAESELVAGFMTEHSAISFTFLFLGEYANIITISTVLNLMFLGFYNPLVIYLFIWIRATLPRLRFDQLLRLGWQYLLPFLIGFLMIQPSTLFVLDLF.

The next 9 membrane-spanning stretches (helical) occupy residues 1–21, 34–54, 66–86, 99–119, 139–159, 170–190, 206–228, 235–257, and 277–297; these read MKSL…TLAE, PNHV…KLIL, WLFV…WLVI, LSIL…IYTG, VSYE…GATL, GTVL…AALA, LVAG…GEYA, TVLN…IWIR, and LPFL…LDLF.

The protein belongs to the complex I subunit 1 family.

The protein resides in the mitochondrion inner membrane. The catalysed reaction is a ubiquinone + NADH + 5 H(+)(in) = a ubiquinol + NAD(+) + 4 H(+)(out). Core subunit of the mitochondrial membrane respiratory chain NADH dehydrogenase (Complex I) that is believed to belong to the minimal assembly required for catalysis. Complex I functions in the transfer of electrons from NADH to the respiratory chain. The immediate electron acceptor for the enzyme is believed to be ubiquinone. This Hyaloraphidium curvatum (Lower fungus) protein is NADH-ubiquinone oxidoreductase chain 1.